Consider the following 513-residue polypeptide: Na(+)/H(+) antiporter NhaB (513 aa).

Transmembrane regions (helical) follow at residues 23–43 (LALI…PFVA), 52–72 (IFTL…LLAI), 97–117 (LLLM…LFIF), 120–140 (LLLS…AAAF), 144–164 (FLDA…FYGI), 202–222 (LMMH…VGEP), 238–258 (FFLR…LTCL), 303–323 (AIIG…VGLI), 348–368 (TESL…AVII), 391–411 (LFYI…VGTI), 447–467 (ATPN…APLI), and 475–495 (VWMA…CVEF).

Belongs to the NhaB Na(+)/H(+) (TC 2.A.34) antiporter family.

It localises to the cell inner membrane. It catalyses the reaction 2 Na(+)(in) + 3 H(+)(out) = 2 Na(+)(out) + 3 H(+)(in). Functionally, na(+)/H(+) antiporter that extrudes sodium in exchange for external protons. This chain is Na(+)/H(+) antiporter NhaB, found in Escherichia coli (strain 55989 / EAEC).